Consider the following 213-residue polypeptide: Octanoyltransferase (213 aa).

One can recognise a BPL/LPL catalytic domain in the interval Thr-36–Leu-211. Substrate is bound by residues Arg-75–His-82, Ser-142–Gly-144, and Gly-155–Ala-157. Residue Cys-173 is the Acyl-thioester intermediate of the active site.

Belongs to the LipB family.

It is found in the cytoplasm. It catalyses the reaction octanoyl-[ACP] + L-lysyl-[protein] = N(6)-octanoyl-L-lysyl-[protein] + holo-[ACP] + H(+). It participates in protein modification; protein lipoylation via endogenous pathway; protein N(6)-(lipoyl)lysine from octanoyl-[acyl-carrier-protein]: step 1/2. In terms of biological role, catalyzes the transfer of endogenously produced octanoic acid from octanoyl-acyl-carrier-protein onto the lipoyl domains of lipoate-dependent enzymes. Lipoyl-ACP can also act as a substrate although octanoyl-ACP is likely to be the physiological substrate. In Photorhabdus laumondii subsp. laumondii (strain DSM 15139 / CIP 105565 / TT01) (Photorhabdus luminescens subsp. laumondii), this protein is Octanoyltransferase.